Here is a 601-residue protein sequence, read N- to C-terminus: Glutathione-regulated potassium-efflux system protein KefB (601 aa).

Helical transmembrane passes span 4–24 (ADLL…VPLA), 29–49 (IGAV…GLGF), 55–75 (EILH…GLEL), 87–107 (IFGV…GLLM), 111–131 (FLWQ…TAMA), 152–172 (VLLF…LLAG), 177–197 (HFDW…LIGG), 207–227 (FIAA…LVLS), 230–250 (LFMD…GVLL), 262–282 (AIDP…GMSL), 284–304 (LGVL…LVVI), 324–344 (MQFA…FSTA), and 356–376 (ALLL…MKGI). In terms of domain architecture, RCK N-terminal spans 400–519 (KPQVIVVGFG…AGVTQFSRET (120 aa)).

It belongs to the monovalent cation:proton antiporter 2 (CPA2) transporter (TC 2.A.37) family. KefB subfamily. As to quaternary structure, interacts with the regulatory subunit KefG.

It localises to the cell inner membrane. Pore-forming subunit of a potassium efflux system that confers protection against electrophiles. Catalyzes K(+)/H(+) antiport. The chain is Glutathione-regulated potassium-efflux system protein KefB from Salmonella newport (strain SL254).